The following is a 349-amino-acid chain: Farnesyl pyrophosphate synthase (349 aa).

Isopentenyl diphosphate is bound by residues K48, R51, and Q90. Mg(2+)-binding residues include D97 and D101. R106 serves as a coordination point for dimethylallyl diphosphate. Residue R107 coordinates isopentenyl diphosphate. Dimethylallyl diphosphate contacts are provided by K194, T195, Q234, K251, and K260.

This sequence belongs to the FPP/GGPP synthase family. Requires Mg(2+) as cofactor.

It is found in the cytoplasm. It catalyses the reaction isopentenyl diphosphate + dimethylallyl diphosphate = (2E)-geranyl diphosphate + diphosphate. The enzyme catalyses isopentenyl diphosphate + (2E)-geranyl diphosphate = (2E,6E)-farnesyl diphosphate + diphosphate. The protein operates within isoprenoid biosynthesis; farnesyl diphosphate biosynthesis; farnesyl diphosphate from geranyl diphosphate and isopentenyl diphosphate: step 1/1. It participates in isoprenoid biosynthesis; geranyl diphosphate biosynthesis; geranyl diphosphate from dimethylallyl diphosphate and isopentenyl diphosphate: step 1/1. Catalyzes the sequential condensation of isopentenyl pyrophosphate with the allylic pyrophosphates, dimethylallyl pyrophosphate, and then with the resultant geranylpyrophosphate to the ultimate product farnesyl pyrophosphate. The chain is Farnesyl pyrophosphate synthase (FPS1) from Kluyveromyces lactis (strain ATCC 8585 / CBS 2359 / DSM 70799 / NBRC 1267 / NRRL Y-1140 / WM37) (Yeast).